We begin with the raw amino-acid sequence, 99 residues long: Monothiol glutaredoxin-S11 (99 aa).

A Glutaredoxin domain is found at 1 to 99; sequence MDKVMRMSSE…LVPLVKPYLC (99 aa). Cys-21 provides a ligand contact to [2Fe-2S] cluster.

It belongs to the glutaredoxin family. CC-type subfamily.

The protein localises to the cytoplasm. Its function is as follows. May only reduce GSH-thiol disulfides, but not protein disulfides. This chain is Monothiol glutaredoxin-S11 (GRXS11), found in Arabidopsis thaliana (Mouse-ear cress).